Here is a 551-residue protein sequence, read N- to C-terminus: E3 ubiquitin-protein ligase TRIM8 (551 aa).

The RING-type zinc-finger motif lies at 15–56 (CPICLHVFVEPVQLPCKHNFCRGCIGEAWAKDSGLVRCPECN). 2 B box-type zinc fingers span residues 92–132 (CVFC…ARGH) and 140–182 (VRAW…VCDV). The stretch at 181–249 (DVEIRRNEIR…HQLLDEDLRQ (69 aa)) forms a coiled coil.

This sequence belongs to the TRIM/RBCC family. In terms of assembly, homodimer. Interacts with SOCS1 (via) SH2 domain and SOCS box. Interacts with HSP90AB1; prevents nucleus translocation of phosphorylated STAT3 and HSP90AB1. Interacts with MAP3K7/TAK1. Interacts with PIAS3. Interacts with TICAM1. Interacts with TRIM15; this interaction prevents TRIM8 cytoplasmic translocation. Widely expressed. Expressed in glomerular podocytes of kidneys.

It localises to the cytoplasm. Its subcellular location is the nucleus. It is found in the nuclear body. The enzyme catalyses S-ubiquitinyl-[E2 ubiquitin-conjugating enzyme]-L-cysteine + [acceptor protein]-L-lysine = [E2 ubiquitin-conjugating enzyme]-L-cysteine + N(6)-ubiquitinyl-[acceptor protein]-L-lysine.. The protein operates within protein modification; protein ubiquitination. E3 ubiquitin-protein ligase that participates in multiple biological processes including cell survival, differentiation, apoptosis, and in particular, the innate immune response. Participates in the activation of interferon-gamma signaling by promoting proteasomal degradation of the repressor SOCS1. Plays a positive role in the TNFalpha and IL-1beta signaling pathways. Mechanistically, induces the 'Lys-63'-linked polyubiquitination of MAP3K7/TAK1 component leading to the activation of NF-kappa-B. Also modulates STAT3 activity through negative regulation of PIAS3, either by degradation of PIAS3 through the ubiquitin-proteasome pathway or exclusion of PIAS3 from the nucleus. Negatively regulates TLR3/4-mediated innate immune response by catalyzing 'Lys-6'- and 'Lys-33'-linked polyubiquitination of TICAM1 and thereby disrupting the TICAM1-TBK1 interaction. This chain is E3 ubiquitin-protein ligase TRIM8 (TRIM8), found in Homo sapiens (Human).